We begin with the raw amino-acid sequence, 669 residues long: DNA mismatch repair protein MutL (669 aa).

Positions 343 to 408 (SAFHRAEPEE…RAPSDSSVRE (66 aa)) are disordered. The segment covering 344–356 (AFHRAEPEERESQ) has biased composition (basic and acidic residues). Over residues 357 to 372 (PETTPQYSPQSVSTTV) the composition is skewed to polar residues. The span at 390-408 (TDYEIKPRDRAPSDSSVRE) shows a compositional bias: basic and acidic residues.

Belongs to the DNA mismatch repair MutL/HexB family.

This protein is involved in the repair of mismatches in DNA. It is required for dam-dependent methyl-directed DNA mismatch repair. May act as a 'molecular matchmaker', a protein that promotes the formation of a stable complex between two or more DNA-binding proteins in an ATP-dependent manner without itself being part of a final effector complex. The polypeptide is DNA mismatch repair protein MutL (Vibrio parahaemolyticus serotype O3:K6 (strain RIMD 2210633)).